Reading from the N-terminus, the 344-residue chain is Holliday junction branch migration complex subunit RuvB (344 aa).

The segment at 4–194 (CLLRFCYNSL…FGITGHMEYY (191 aa)) is large ATPase domain (RuvB-L). Residues leucine 33, arginine 34, glycine 75, lysine 78, threonine 79, threonine 80, 141 to 143 (EDF), arginine 184, tyrosine 194, and arginine 231 contribute to the ATP site. Threonine 79 contacts Mg(2+). The small ATPAse domain (RuvB-S) stretch occupies residues 195–265 (TDIDLTEIVE…ITDKALTMLD (71 aa)). The segment at 268 to 344 (HEGLDYVDQK…YEHLGYRYTE (77 aa)) is head domain (RuvB-H). DNA-binding residues include arginine 304, arginine 323, arginine 325, and arginine 328.

This sequence belongs to the RuvB family. As to quaternary structure, homohexamer. Forms an RuvA(8)-RuvB(12)-Holliday junction (HJ) complex. HJ DNA is sandwiched between 2 RuvA tetramers; dsDNA enters through RuvA and exits via RuvB. An RuvB hexamer assembles on each DNA strand where it exits the tetramer. Each RuvB hexamer is contacted by two RuvA subunits (via domain III) on 2 adjacent RuvB subunits; this complex drives branch migration. In the full resolvosome a probable DNA-RuvA(4)-RuvB(12)-RuvC(2) complex forms which resolves the HJ.

Its subcellular location is the cytoplasm. The enzyme catalyses ATP + H2O = ADP + phosphate + H(+). In terms of biological role, the RuvA-RuvB-RuvC complex processes Holliday junction (HJ) DNA during genetic recombination and DNA repair, while the RuvA-RuvB complex plays an important role in the rescue of blocked DNA replication forks via replication fork reversal (RFR). RuvA specifically binds to HJ cruciform DNA, conferring on it an open structure. The RuvB hexamer acts as an ATP-dependent pump, pulling dsDNA into and through the RuvAB complex. RuvB forms 2 homohexamers on either side of HJ DNA bound by 1 or 2 RuvA tetramers; 4 subunits per hexamer contact DNA at a time. Coordinated motions by a converter formed by DNA-disengaged RuvB subunits stimulates ATP hydrolysis and nucleotide exchange. Immobilization of the converter enables RuvB to convert the ATP-contained energy into a lever motion, pulling 2 nucleotides of DNA out of the RuvA tetramer per ATP hydrolyzed, thus driving DNA branch migration. The RuvB motors rotate together with the DNA substrate, which together with the progressing nucleotide cycle form the mechanistic basis for DNA recombination by continuous HJ branch migration. Branch migration allows RuvC to scan DNA until it finds its consensus sequence, where it cleaves and resolves cruciform DNA. This is Holliday junction branch migration complex subunit RuvB from Streptococcus mutans serotype c (strain ATCC 700610 / UA159).